A 514-amino-acid polypeptide reads, in one-letter code: DNA damage-binding protein CMR1 (514 aa).

The interval 26–116 is disordered; that stretch reads NLDSLSQSIK…VKQEEKEELS (91 aa). Residues 34-44 are compositionally biased toward basic and acidic residues; sequence IKRELPRASET. Over residues 45–55 the composition is skewed to basic residues; it reads KKRKTTPRTKA. Basic and acidic residues-rich tracts occupy residues 56–65 and 92–116; these read VKKEDVEPSR and KFEDKVIKSDSTEPEVKQEEKEELS. 7 WD repeats span residues 180-221, 229-269, 280-320, 327-367, 385-423, 438-481, and 483-514; these read ISHT…DDSE, PHGK…STEV, DYAL…KPLK, LHDK…KANA, SSRLSVSCVDWNSENRLVCNGYDDYINIFDLNEESLIPD, GRWV…IAHL, and DSVGAVPAVCGFHPTKNWVVGGSASGKVYLFE.

It belongs to the WD repeat DDB2/WDR76 family.

DNA-binding protein that binds to both single- and double-stranded DNA. Binds preferentially to UV-damaged DNA. May be involved in DNA-metabolic processes. This Scheffersomyces stipitis (strain ATCC 58785 / CBS 6054 / NBRC 10063 / NRRL Y-11545) (Yeast) protein is DNA damage-binding protein CMR1 (PRW1).